The chain runs to 128 residues: MGLMWGLFSVIIASVAQLSLGFAASHLPPMTHLWDFIAALLAFGLDARILLLGLLGYLLSVFCWYKTLHKLALSKAYALLSMSYVLVWIASMVLPGWEGTFSLKALLGVACIMSGLMLIFLPMTKQRY.

Topologically, residues 1-2 (MG) are cytoplasmic. Residues 3-23 (LMWGLFSVIIASVAQLSLGFA) traverse the membrane as a helical segment. Over 24–35 (ASHLPPMTHLWD) the chain is Periplasmic. A helical membrane pass occupies residues 36 to 56 (FIAALLAFGLDARILLLGLLG). Topologically, residues 57–76 (YLLSVFCWYKTLHKLALSKA) are cytoplasmic. A helical membrane pass occupies residues 77 to 97 (YALLSMSYVLVWIASMVLPGW). At 98 to 100 (EGT) the chain is on the periplasmic side. The chain crosses the membrane as a helical span at residues 101–121 (FSLKALLGVACIMSGLMLIFL). Over 122–128 (PMTKQRY) the chain is Cytoplasmic.

The protein belongs to the ArnF family. Heterodimer of ArnE and ArnF.

The protein resides in the cell inner membrane. The protein operates within bacterial outer membrane biogenesis; lipopolysaccharide biosynthesis. Its function is as follows. Translocates 4-amino-4-deoxy-L-arabinose-phosphoundecaprenol (alpha-L-Ara4N-phosphoundecaprenol) from the cytoplasmic to the periplasmic side of the inner membrane. The sequence is that of Probable 4-amino-4-deoxy-L-arabinose-phosphoundecaprenol flippase subunit ArnF from Escherichia coli (strain 55989 / EAEC).